We begin with the raw amino-acid sequence, 581 residues long: Proline--tRNA ligase (581 aa).

It belongs to the class-II aminoacyl-tRNA synthetase family. ProS type 1 subfamily. In terms of assembly, homodimer.

Its subcellular location is the cytoplasm. The enzyme catalyses tRNA(Pro) + L-proline + ATP = L-prolyl-tRNA(Pro) + AMP + diphosphate. Functionally, catalyzes the attachment of proline to tRNA(Pro) in a two-step reaction: proline is first activated by ATP to form Pro-AMP and then transferred to the acceptor end of tRNA(Pro). As ProRS can inadvertently accommodate and process non-cognate amino acids such as alanine and cysteine, to avoid such errors it has two additional distinct editing activities against alanine. One activity is designated as 'pretransfer' editing and involves the tRNA(Pro)-independent hydrolysis of activated Ala-AMP. The other activity is designated 'posttransfer' editing and involves deacylation of mischarged Ala-tRNA(Pro). The misacylated Cys-tRNA(Pro) is not edited by ProRS. The chain is Proline--tRNA ligase from Kosmotoga olearia (strain ATCC BAA-1733 / DSM 21960 / TBF 19.5.1).